A 391-amino-acid polypeptide reads, in one-letter code: Ectodysplasin-A (391 aa).

The Cytoplasmic segment spans residues 1–41; sequence MGYPEVERRELLPAAAPRERGSQGCGCGGAPARAGEGNSCL. The chain crosses the membrane as a helical; Signal-anchor for type II membrane protein span at residues 42–62; sequence LFLGFFGLSLALHLLTLCCYL. The Extracellular segment spans residues 63–391; the sequence is ELRSELRRER…AIRLGEAPAS (329 aa). 2 disordered regions span residues 73–127 and 146–245; these read GAES…HSDS and YSEE…GTRE. Residues 86-101 are compositionally biased toward low complexity; it reads TSGTLSSLGGLDPDSP. Residues 102 to 113 are compositionally biased toward polar residues; sequence ITSHLGQPSPKQ. One can recognise a Collagen-like domain in the interval 180-229; that stretch reads GPPGPNGPPGPPGPPGPQGPPGIPGIPGIPGTTVMGPPGPPGPPGPQGPP. 2 stretches are compositionally biased toward pro residues: residues 181-203 and 216-228; these read PPGPNGPPGPPGPPGPQGPPGIP and PPGPPGPPGPQGP. The THD domain occupies 249–385; sequence AVVHLQGQGS…HTTFFGAIRL (137 aa). N-linked (GlcNAc...) asparagine glycosylation occurs at Asn313. Cys332 and Cys346 are joined by a disulfide. Asn372 carries an N-linked (GlcNAc...) asparagine glycan.

Belongs to the tumor necrosis factor family. Homotrimer. The homotrimers may then dimerize and form higher-order oligomers. In terms of processing, N-glycosylated. Post-translationally, processing by furin produces a secreted form. Not abundant; expressed in specific cell types of ectodermal (but not mesodermal) origin of keratinocytes, hair follicles, sweat glands. Also in adult heart, liver, muscle, pancreas, prostate, fetal liver, uterus, small intestine and umbilical cord.

The protein localises to the cell membrane. The protein resides in the secreted. Cytokine which is involved in epithelial-mesenchymal signaling during morphogenesis of ectodermal organs. Functions as a ligand activating the DEATH-domain containing receptors EDAR and EDA2R. May also play a role in cell adhesion. In terms of biological role, binds only to the receptor EDAR, while isoform 3 binds exclusively to the receptor EDA2R. Functionally, binds only to the receptor EDA2R. In Homo sapiens (Human), this protein is Ectodysplasin-A (EDA).